Consider the following 368-residue polypeptide: Homoserine O-acetyltransferase (368 aa).

Positions 43–346 constitute an AB hydrolase-1 domain; it reads ILLEHALTGT…EYGHDAFLVE (304 aa). The Nucleophile role is filled by Ser-145. Arg-212 is a substrate binding site. Active-site residues include Asp-307 and His-340. Position 341 (Asp-341) interacts with substrate.

Belongs to the AB hydrolase superfamily. MetX family. As to quaternary structure, homodimer.

It localises to the cytoplasm. The catalysed reaction is L-homoserine + acetyl-CoA = O-acetyl-L-homoserine + CoA. Its pathway is amino-acid biosynthesis; L-methionine biosynthesis via de novo pathway; O-acetyl-L-homoserine from L-homoserine: step 1/1. Its function is as follows. Transfers an acetyl group from acetyl-CoA to L-homoserine, forming acetyl-L-homoserine. This chain is Homoserine O-acetyltransferase, found in Listeria monocytogenes serovar 1/2a (strain ATCC BAA-679 / EGD-e).